The chain runs to 505 residues: Maturase K (505 aa).

This sequence belongs to the intron maturase 2 family. MatK subfamily.

The protein resides in the plastid. It is found in the chloroplast. In terms of biological role, usually encoded in the trnK tRNA gene intron. Probably assists in splicing its own and other chloroplast group II introns. This is Maturase K from Coffea arabica (Arabian coffee).